A 424-amino-acid polypeptide reads, in one-letter code: CinA-like protein (424 aa).

It belongs to the CinA family.

This is CinA-like protein from Prochlorococcus marinus (strain AS9601).